We begin with the raw amino-acid sequence, 162 residues long: Autophagy-related protein 8 (162 aa).

A compositionally biased stretch (basic and acidic residues) spans 1 to 27; sequence MRSKFKDEHPFEKRKAEAERIRQKYSD. The segment at 1-42 is disordered; it reads MRSKFKDEHPFEKRKAEAERIRQKYSDRIPPSPHSPASRLIG. Glycine 157 carries Phosphatidylethanolamine amidated glycine lipidation. A propeptide spans 158–162 (removed in mature form); sequence GFETA.

The protein belongs to the ATG8 family.

It is found in the cytoplasmic vesicle. Its subcellular location is the autophagosome membrane. It localises to the vacuole membrane. Its function is as follows. Ubiquitin-like modifier involved in autophagosome formation. With ATG4, mediates the delivery of the autophagosomes to the vacuole via the microtubule cytoskeleton. Required for selective autophagic degradation of the nucleus (nucleophagy) as well as for mitophagy which contributes to regulate mitochondrial quantity and quality by eliminating the mitochondria to a basal level to fulfill cellular energy requirements and preventing excess ROS production. Also participates in membrane fusion events that take place in the early secretory pathway. Also involved in endoplasmic reticulum-specific autophagic process and is essential for the survival of cells subjected to severe ER stress. The ATG8-PE conjugate mediates tethering between adjacent membranes and stimulates membrane hemifusion, leading to expansion of the autophagosomal membrane during autophagy. This chain is Autophagy-related protein 8, found in Colletotrichum higginsianum (strain IMI 349063) (Crucifer anthracnose fungus).